The following is a 361-amino-acid chain: D-alanine--D-alanine ligase (361 aa).

Positions 134-344 (KLLLKSFDIP…FKDLVDNLID (211 aa)) constitute an ATP-grasp domain. 167–222 (KEVLGYPVIVKPAVLGSSIGINVAYSENQIESFIKEALKYDLTIVIEKFIEAREIE) serves as a coordination point for ATP. Positions 297, 311, and 313 each coordinate Mg(2+).

Belongs to the D-alanine--D-alanine ligase family. The cofactor is Mg(2+). Mn(2+) is required as a cofactor.

The protein localises to the cytoplasm. It carries out the reaction 2 D-alanine + ATP = D-alanyl-D-alanine + ADP + phosphate + H(+). It participates in cell wall biogenesis; peptidoglycan biosynthesis. Its function is as follows. Cell wall formation. This chain is D-alanine--D-alanine ligase, found in Borreliella burgdorferi (strain ZS7) (Borrelia burgdorferi).